Consider the following 245-residue polypeptide: 3-deoxy-manno-octulosonate cytidylyltransferase (245 aa).

It belongs to the KdsB family.

Its subcellular location is the cytoplasm. It catalyses the reaction 3-deoxy-alpha-D-manno-oct-2-ulosonate + CTP = CMP-3-deoxy-beta-D-manno-octulosonate + diphosphate. It participates in nucleotide-sugar biosynthesis; CMP-3-deoxy-D-manno-octulosonate biosynthesis; CMP-3-deoxy-D-manno-octulosonate from 3-deoxy-D-manno-octulosonate and CTP: step 1/1. It functions in the pathway bacterial outer membrane biogenesis; lipopolysaccharide biosynthesis. Activates KDO (a required 8-carbon sugar) for incorporation into bacterial lipopolysaccharide in Gram-negative bacteria. In Desulfatibacillum aliphaticivorans, this protein is 3-deoxy-manno-octulosonate cytidylyltransferase.